Here is a 301-residue protein sequence, read N- to C-terminus: Formylmethanofuran--tetrahydromethanopterin formyltransferase-like protein (301 aa).

The protein belongs to the FTR family.

In Archaeoglobus fulgidus (strain ATCC 49558 / DSM 4304 / JCM 9628 / NBRC 100126 / VC-16), this protein is Formylmethanofuran--tetrahydromethanopterin formyltransferase-like protein.